Consider the following 349-residue polypeptide: tRNA pseudouridine synthase D (349 aa).

Residue D77 is the Nucleophile of the active site. In terms of domain architecture, TRUD spans 151 to 309; sequence GVPNYFGEQR…ETIDESTLKL (159 aa).

The protein belongs to the pseudouridine synthase TruD family.

The enzyme catalyses uridine(13) in tRNA = pseudouridine(13) in tRNA. Its function is as follows. Responsible for synthesis of pseudouridine from uracil-13 in transfer RNAs. This Pseudoalteromonas translucida (strain TAC 125) protein is tRNA pseudouridine synthase D.